We begin with the raw amino-acid sequence, 356 residues long: Fe(3+) ions import ATP-binding protein FbpC 2 (356 aa).

Residues 12–246 (LTVKNLNKFF…PNHLETAKFM (235 aa)) enclose the ABC transporter domain. 44–51 (GSSGCGKT) provides a ligand contact to ATP.

It belongs to the ABC transporter superfamily. Fe(3+) ion importer (TC 3.A.1.10) family. The complex is composed of two ATP-binding proteins (FbpC), two transmembrane proteins (FbpB) and a solute-binding protein (FbpA).

The protein localises to the cell inner membrane. It carries out the reaction Fe(3+)(out) + ATP + H2O = Fe(3+)(in) + ADP + phosphate + H(+). In terms of biological role, part of the ABC transporter complex FbpABC involved in Fe(3+) ions import. Responsible for energy coupling to the transport system. This is Fe(3+) ions import ATP-binding protein FbpC 2 from Haemophilus influenzae (strain ATCC 51907 / DSM 11121 / KW20 / Rd).